A 187-amino-acid chain; its full sequence is MDNEFEMLKAGKLLIASANLLESNFKRTVLLMCEHNDEGSIGFILNKPMEFKVCEAISGFDEIDEPLHMGGPVQVDTVHFLHTRGDVIDDAQEVLPGLFWGGDKEQLSYLINTGVIRPSEVRFFLGYAGWSAGQLKDEFEEGSWYTADASNEQVFTDEYERMWSRTVRSKGGDYCLVANSPELPGMN.

The protein belongs to the UPF0301 (AlgH) family.

This Chlorobaculum parvum (strain DSM 263 / NCIMB 8327) (Chlorobium vibrioforme subsp. thiosulfatophilum) protein is UPF0301 protein Cpar_0662.